Reading from the N-terminus, the 122-residue chain is Ribosome-binding factor A (122 aa).

This sequence belongs to the RbfA family. In terms of assembly, monomer. Binds 30S ribosomal subunits, but not 50S ribosomal subunits or 70S ribosomes.

The protein resides in the cytoplasm. One of several proteins that assist in the late maturation steps of the functional core of the 30S ribosomal subunit. Associates with free 30S ribosomal subunits (but not with 30S subunits that are part of 70S ribosomes or polysomes). Required for efficient processing of 16S rRNA. May interact with the 5'-terminal helix region of 16S rRNA. The protein is Ribosome-binding factor A of Burkholderia thailandensis (strain ATCC 700388 / DSM 13276 / CCUG 48851 / CIP 106301 / E264).